Consider the following 485-residue polypeptide: Glutamate--tRNA ligase 1 (485 aa).

A 'HIGH' region motif is present at residues proline 9 to glycine 19. The 'KMSKS' region signature appears at lysine 250 to arginine 254. ATP is bound at residue lysine 253.

Belongs to the class-I aminoacyl-tRNA synthetase family. Glutamate--tRNA ligase type 1 subfamily. In terms of assembly, monomer.

The protein localises to the cytoplasm. The enzyme catalyses tRNA(Glu) + L-glutamate + ATP = L-glutamyl-tRNA(Glu) + AMP + diphosphate. In terms of biological role, catalyzes the attachment of glutamate to tRNA(Glu) in a two-step reaction: glutamate is first activated by ATP to form Glu-AMP and then transferred to the acceptor end of tRNA(Glu). This Caldicellulosiruptor saccharolyticus (strain ATCC 43494 / DSM 8903 / Tp8T 6331) protein is Glutamate--tRNA ligase 1.